A 122-amino-acid chain; its full sequence is Large ribosomal subunit protein uL14c (122 aa).

This sequence belongs to the universal ribosomal protein uL14 family. Part of the 50S ribosomal subunit.

It localises to the plastid. The protein localises to the chloroplast. Functionally, binds to 23S rRNA. This chain is Large ribosomal subunit protein uL14c, found in Anthoceros angustus (Hornwort).